Consider the following 70-residue polypeptide: DNA-directed RNA polymerase subunit omega (70 aa).

It belongs to the RNA polymerase subunit omega family. In terms of assembly, the RNAP catalytic core consists of 2 alpha, 1 beta, 1 beta' and 1 omega subunit. When a sigma factor is associated with the core the holoenzyme is formed, which can initiate transcription.

The catalysed reaction is RNA(n) + a ribonucleoside 5'-triphosphate = RNA(n+1) + diphosphate. Promotes RNA polymerase assembly. Latches the N- and C-terminal regions of the beta' subunit thereby facilitating its interaction with the beta and alpha subunits. The chain is DNA-directed RNA polymerase subunit omega from Nitratiruptor sp. (strain SB155-2).